Consider the following 517-residue polypeptide: Quinol oxidase subunit 1 (517 aa).

Transmembrane regions (helical) follow at residues 19-39, 64-84, 98-118, 150-170, 185-205, 226-246, 271-291, 303-323, 333-353, 369-389, 412-432, and 460-480; these read VVWL…IAAM, IHGW…VIGF, QMAI…AGSP, MAYL…VTLI, IFAA…PALA, WAIL…FPLF, IYLL…TWPL, TLIL…TIFT, VGMG…QALV, VVGH…TTVF, IGMI…SVAG, and IGIP…LAYA. A Fe(II)-heme a-binding site is contributed by histidine 65. 4 residues coordinate Cu cation: histidine 235, tyrosine 239, histidine 284, and histidine 285. Positions 235-239 form a cross-link, 1'-histidyl-3'-tyrosine (His-Tyr); it reads HPVVY. Histidine 372 contacts heme a3. A Fe(II)-heme a-binding site is contributed by histidine 374.

The protein belongs to the heme-copper respiratory oxidase family.

The protein resides in the cell membrane. The enzyme catalyses 2 a quinol + O2 = 2 a quinone + 2 H2O. Functionally, catalyzes the reduction of oxygen to water. Its function is as follows. Subunits I, II and III form the functional core of the enzyme complex. Electrons originating in caldariella quinol are transferred to the binuclear center formed by heme A3 and Cu(B). In terms of biological role, subunit I binds heme a and the bimetallic center. This chain is Quinol oxidase subunit 1 (soxB), found in Sulfolobus acidocaldarius (strain ATCC 33909 / DSM 639 / JCM 8929 / NBRC 15157 / NCIMB 11770).